Consider the following 205-residue polypeptide: MADYKHPLRVGVGGPVGSGKTALLEALCKAMRDQYQLAVVTNDIYTKEDQRILTEAGALEPDRIVGVETGGCPHTAIREDASMNLAAVETLSEKFGNLDLIFVESGGDNLSATFSPELADLTIYVIDVAEGEKIPRKGGPGITKSDFLVINKTDLAPYVGASLEVMERDTNRMRGERPWTFTNLKVGDGLNKIIGFLEDKGMLKV.

Residue Gly-14–Thr-21 coordinates GTP.

It belongs to the SIMIBI class G3E GTPase family. UreG subfamily. As to quaternary structure, homodimer. UreD, UreF and UreG form a complex that acts as a GTP-hydrolysis-dependent molecular chaperone, activating the urease apoprotein by helping to assemble the nickel containing metallocenter of UreC. The UreE protein probably delivers the nickel.

The protein resides in the cytoplasm. Functionally, facilitates the functional incorporation of the urease nickel metallocenter. This process requires GTP hydrolysis, probably effectuated by UreG. This is Urease accessory protein UreG from Enterobacter sp. (strain 638).